Reading from the N-terminus, the 174-residue chain is ATP synthase subunit d, mitochondrial (174 aa).

Ser-2 carries the N-acetylserine modification.

This sequence belongs to the ATPase d subunit family. In terms of assembly, F-type ATPases have 2 components, CF(1) - the catalytic core - and CF(0) - the membrane proton channel. In yeast, the dimeric form of ATP synthase consists of 17 polypeptides: alpha, beta, gamma, delta, epsilon, 4 (B), 5 (OSCP), 6 (A), 8, 9 (C), d, E (Tim11), f, g, h, i/j and k.

The protein resides in the mitochondrion. The protein localises to the mitochondrion inner membrane. Mitochondrial membrane ATP synthase (F(1)F(0) ATP synthase or Complex V) produces ATP from ADP in the presence of a proton gradient across the membrane which is generated by electron transport complexes of the respiratory chain. F-type ATPases consist of two structural domains, F(1) - containing the extramembraneous catalytic core, and F(0) - containing the membrane proton channel, linked together by a central stalk and a peripheral stalk. During catalysis, ATP synthesis in the catalytic domain of F(1) is coupled via a rotary mechanism of the central stalk subunits to proton translocation. Part of the complex F(0) domain and the peripheric stalk, which acts as a stator to hold the catalytic alpha(3)beta(3) subcomplex and subunit a/ATP6 static relative to the rotary elements. This is ATP synthase subunit d, mitochondrial (ATP7) from Saccharomyces cerevisiae (strain ATCC 204508 / S288c) (Baker's yeast).